Consider the following 284-residue polypeptide: 2-dehydro-3-deoxyphosphooctonate aldolase (284 aa).

This sequence belongs to the KdsA family.

The protein localises to the cytoplasm. The catalysed reaction is D-arabinose 5-phosphate + phosphoenolpyruvate + H2O = 3-deoxy-alpha-D-manno-2-octulosonate-8-phosphate + phosphate. It participates in carbohydrate biosynthesis; 3-deoxy-D-manno-octulosonate biosynthesis; 3-deoxy-D-manno-octulosonate from D-ribulose 5-phosphate: step 2/3. The protein operates within bacterial outer membrane biogenesis; lipopolysaccharide biosynthesis. The chain is 2-dehydro-3-deoxyphosphooctonate aldolase from Salmonella arizonae (strain ATCC BAA-731 / CDC346-86 / RSK2980).